The sequence spans 157 residues: Protein Smg homolog (157 aa).

The protein belongs to the Smg family.

The sequence is that of Protein Smg homolog from Shewanella sediminis (strain HAW-EB3).